A 120-amino-acid chain; its full sequence is uncharacterized protein (120 aa).

Positions 45-78 form a coiled coil; sequence QLISESLKIAQKDLMEVRKELRKRKIAIRETERD.

This is an uncharacterized protein from Bacillus subtilis (strain 168).